Here is a 243-residue protein sequence, read N- to C-terminus: uncharacterized protein (243 aa).

Residues 2–240 (TKIFAHRGAS…DFPEKASALL (239 aa)) form the GP-PDE domain.

This is an uncharacterized protein from Bacillus subtilis (strain 168).